A 514-amino-acid chain; its full sequence is Sugar transport protein 11 (514 aa).

The Cytoplasmic segment spans residues 1 to 19 (MAGGAFIDESGHGGDYEGR). Residues 20–40 (VTAFVMITCIVAAMGGLLFGY) traverse the membrane as a helical segment. Topologically, residues 41–82 (DIGISGGVISMEDFLTKFFPDVLRQMQNKRGRETEYCKYDNE) are extracellular. A helical membrane pass occupies residues 83 to 103 (LLTLFTSSLYLAALFASFLAS). Residues 104 to 112 (TITRLFGRK) lie on the Cytoplasmic side of the membrane. The chain crosses the membrane as a helical span at residues 113–133 (VSMVIGSLAFLSGALLNGLAI). The Extracellular portion of the chain corresponds to 134–137 (NLEM). A helical membrane pass occupies residues 138 to 158 (LIIGRLFLGVGVGFANQSVPL). Over 159–169 (YLSEMAPAKIR) the chain is Cytoplasmic. The helical transmembrane segment at 170 to 190 (GALNIGFQLAITIGILAANIV) threads the bilayer. Topologically, residues 191 to 204 (NYVTPKLQNGIGWR) are extracellular. Residues 205–225 (LSLGLAGVPAVMMLVGCFFLP) form a helical membrane-spanning segment. At 226–290 (DTPNSILERG…RYRPQLTFCT (65 aa)) the chain is on the cytoplasmic side. The helical transmembrane segment at 291–311 (FIPFFQQLTGINVIMFYAPVL) threads the bilayer. The Extracellular segment spans residues 312–320 (FKTIGFGND). A helical membrane pass occupies residues 321–341 (ASLISAVITGLVNVLSTIVSI). Residues 342-350 (YSVDKFGRR) are Cytoplasmic-facing. Residues 351–371 (ALFLQGGFQMIVTQIAVGSMI) traverse the membrane as a helical segment. The Extracellular portion of the chain corresponds to 372-389 (GWKFGFNGEGNLSGVDAD). Residues 390–410 (IILALICLYVAGFAWSWGPLG) form a helical membrane-spanning segment. The Cytoplasmic portion of the chain corresponds to 411–428 (WLVPSEICPLEIRSAGQS). A helical transmembrane segment spans residues 429–449 (LNVSVNMFFTFFIGQFFLTML). At 450–453 (CHMK) the chain is on the extracellular side. The chain crosses the membrane as a helical span at residues 454–474 (FGLFYFFAGMVLIMTIFIYFL). The Cytoplasmic segment spans residues 475–514 (LPETKGVPIEEMGKVWKEHRYWGKYSNNDDGDDVDDDAYF).

The protein belongs to the major facilitator superfamily. Sugar transporter (TC 2.A.1.1) family. Specifically expressed in germinating pollen and pollen tube (at protein level).

It localises to the cell membrane. With respect to regulation, inhibited by uncouplers such as 2,4-dinitrophenol and carbonyl cyanide-m-chlorophenyl-hydrazone. In terms of biological role, mediates an active uptake of hexoses, probably by sugar/hydrogen symport. Can transport glucose, galactose, mannose, xylose and 3-O-methylglucose, but not fructose and ribose. The protein is Sugar transport protein 11 (STP11) of Arabidopsis thaliana (Mouse-ear cress).